Consider the following 315-residue polypeptide: Protein ORANGE-LIKE, chloroplastic (315 aa).

The transit peptide at M1 to L16 directs the protein to the chloroplast. 2 consecutive transmembrane segments (helical) span residues L155–P175 and I207–V227. The CR-type zinc finger occupies I225 to H307. A CXXCXGXG motif repeat occupies C238–G245. A CXXCXXXG motif repeat occupies C249 to G256. One copy of the CXXCXGXG motif repeat lies at C282–G289. A CXXCXXXG motif repeat occupies C293–G300.

This sequence belongs to the orange-like family. As to quaternary structure, interacts with PSY1.

It localises to the plastid. Its subcellular location is the chloroplast membrane. Functionally, may be associated with accumulation of carotenoids in chromoplasts. In Arabidopsis thaliana (Mouse-ear cress), this protein is Protein ORANGE-LIKE, chloroplastic (ORLIKE).